The following is a 318-amino-acid chain: Homeobox protein Nkx-2.5 (318 aa).

Positions 137–196 form a DNA-binding region, homeobox; it reads RRKPRVLFSQAQVYELERRFKQQRYLSAPERDQLASVLKLTSTQVKIWFQNRRYKCKRQR.

This sequence belongs to the NK-2 homeobox family. As to quaternary structure, homodimer (via the homeobox); binds DNA as homodimer. Interacts (via the homeobox) with TBX5 (via the T-box); this complex binds DNA. Interacts with HIPK1 and HIPK2, but not HIPK3. Interacts with the C-terminal zinc finger of GATA4 through its homeobox domain. Also interacts with JARID2 which represses its ability to activate transcription of ANF. Interacts with FBLIM1. Interacts with TBX18. Interacts with histone methyltransferase NSD2 (via HMG box). Interacts with NEDD9. Interacts with TBX1. In terms of tissue distribution, predominantly in the adult and embryonic heart, and to a lesser extent in lingual muscle, spleen and stomach.

Its subcellular location is the nucleus. Transcription factor required for the development of the heart and the spleen. During heart development, acts as a transcriptional activator of NPPA/ANF in cooperation with GATA4. May cooperate with TBX2 to negatively modulate expression of NPPA/ANF in the atrioventricular canal. Binds to the core DNA motif of NPPA promoter. Together with PBX1, required for spleen development through a mechanism that involves CDKN2B repression. Positively regulates transcription of genes such as COL3A1 and MMP2, resulting in increased pulmonary endothelial fibrosis in response to hypoxia. This is Homeobox protein Nkx-2.5 (Nkx2-5) from Mus musculus (Mouse).